We begin with the raw amino-acid sequence, 456 residues long: Signal recognition particle 54 kDa protein (456 aa).

Residues 104–111 (GLYGNGKT), 184–188 (DTSGR), and 242–245 (TKMD) contribute to the GTP site.

The protein belongs to the GTP-binding SRP family. SRP54 subfamily. Part of the signal recognition particle protein translocation system, which is composed of SRP and FtsY. Archaeal SRP consists of a 7S RNA molecule of 300 nucleotides and two protein subunits: SRP54 and SRP19.

The protein resides in the cytoplasm. The enzyme catalyses GTP + H2O = GDP + phosphate + H(+). In terms of biological role, involved in targeting and insertion of nascent membrane proteins into the cytoplasmic membrane. Binds to the hydrophobic signal sequence of the ribosome-nascent chain (RNC) as it emerges from the ribosomes. The SRP-RNC complex is then targeted to the cytoplasmic membrane where it interacts with the SRP receptor FtsY. The sequence is that of Signal recognition particle 54 kDa protein from Thermoplasma acidophilum (strain ATCC 25905 / DSM 1728 / JCM 9062 / NBRC 15155 / AMRC-C165).